The sequence spans 286 residues: Probable aquaporin PIP2-5 (286 aa).

Met1 carries the N-acetylmethionine modification. The span at 1–18 (MTKEVVGDKRSFSGKDYQ) shows a compositional bias: basic and acidic residues. The disordered stretch occupies residues 1 to 23 (MTKEVVGDKRSFSGKDYQDPPPE). Residues 1 to 38 (MTKEVVGDKRSFSGKDYQDPPPEPLFDATELGKWSFYR) are Cytoplasmic-facing. Residue Lys3 is modified to N6,N6-dimethyllysine. Residues 39-59 (ALIAEFIATLLFLYVTIMTVI) traverse the membrane as a helical segment. Over 60-75 (GYKSQTDPALNPDQCT) the chain is Extracellular. The chain crosses the membrane as a helical span at residues 76 to 96 (GVGVLGIAWAFGGMIFILVYC). Over 97–124 (TAGISGGHINPAVTFGLLLARKVTLVRA) the chain is Cytoplasmic. The NPA 1 motif lies at 106–108 (NPA). The chain crosses the membrane as a helical span at residues 125–145 (VMYMVAQCLGAICGVALVKAF). Topologically, residues 146–165 (QSAYFTRYGGGANGLSDGYS) are extracellular. The chain crosses the membrane as a helical span at residues 166-186 (IGTGVAAEIIGTFVLVYTVFS). Residues 187–200 (ATDPKRSARDSHVP) lie on the Cytoplasmic side of the membrane. Residues 201–221 (VLAPLPIGFAVFIVHLATIPI) traverse the membrane as a helical segment. Residues 222–248 (TGTGINPARSLGAAIIYNKDKAWDHHW) lie on the Extracellular side of the membrane. The NPA 2 motif lies at 227 to 229 (NPA). Residues 249-269 (IFWVGPFAGAAIAAFYHQFVL) form a helical membrane-spanning segment. Topologically, residues 270–286 (RAGAIKALGSFRSQPHV) are cytoplasmic. 2 positions are modified to phosphoserine: Ser279 and Ser282.

This sequence belongs to the MIP/aquaporin (TC 1.A.8) family. PIP (TC 1.A.8.11) subfamily. Expressed in green siliques.

Its subcellular location is the cell membrane. In terms of biological role, aquaporins facilitate the transport of water and small neutral solutes across cell membranes. This chain is Probable aquaporin PIP2-5 (PIP2-5), found in Arabidopsis thaliana (Mouse-ear cress).